A 627-amino-acid chain; its full sequence is Sister chromatid cohesion 1 protein 1 (627 aa).

Disordered stretches follow at residues 211–294 (GDDE…TATS), 395–416 (MHNH…NLDS), and 461–510 (GDDV…VAEE). 3 stretches are compositionally biased toward basic and acidic residues: residues 254 to 263 (EQQENRRDGF), 272 to 282 (IPDKEEHDRPQ), and 395 to 408 (MHNH…ERSD). Residues 467 to 487 (MPSTPSARGAASINNIEISSK) show a composition bias toward polar residues.

It belongs to the rad21 family. Component of the cohesin complex. In terms of tissue distribution, isoform 2 is expressed at low levels in buds, leaves and roots, whereas expression of isoform 1 is confined to buds.

It is found in the nucleus. Its function is as follows. Involved in chromosome condensation, pairing and segregation during meiosis. Responsible for cohesion between replicated sister chromatids. This Arabidopsis thaliana (Mouse-ear cress) protein is Sister chromatid cohesion 1 protein 1 (SYN1).